The following is a 94-amino-acid chain: Integration host factor subunit beta (94 aa).

The protein belongs to the bacterial histone-like protein family. As to quaternary structure, heterodimer of an alpha and a beta chain.

This protein is one of the two subunits of integration host factor, a specific DNA-binding protein that functions in genetic recombination as well as in transcriptional and translational control. The polypeptide is Integration host factor subunit beta (Salmonella arizonae (strain ATCC BAA-731 / CDC346-86 / RSK2980)).